Here is a 473-residue protein sequence, read N- to C-terminus: Aspartyl/glutamyl-tRNA(Asn/Gln) amidotransferase subunit B (473 aa).

Belongs to the GatB/GatE family. GatB subfamily. Heterotrimer of A, B and C subunits.

The catalysed reaction is L-glutamyl-tRNA(Gln) + L-glutamine + ATP + H2O = L-glutaminyl-tRNA(Gln) + L-glutamate + ADP + phosphate + H(+). It carries out the reaction L-aspartyl-tRNA(Asn) + L-glutamine + ATP + H2O = L-asparaginyl-tRNA(Asn) + L-glutamate + ADP + phosphate + 2 H(+). Its function is as follows. Allows the formation of correctly charged Asn-tRNA(Asn) or Gln-tRNA(Gln) through the transamidation of misacylated Asp-tRNA(Asn) or Glu-tRNA(Gln) in organisms which lack either or both of asparaginyl-tRNA or glutaminyl-tRNA synthetases. The reaction takes place in the presence of glutamine and ATP through an activated phospho-Asp-tRNA(Asn) or phospho-Glu-tRNA(Gln). The polypeptide is Aspartyl/glutamyl-tRNA(Asn/Gln) amidotransferase subunit B (Wolbachia sp. subsp. Drosophila simulans (strain wRi)).